The chain runs to 287 residues: Light-independent protochlorophyllide reductase iron-sulfur ATP-binding protein (287 aa).

ATP contacts are provided by residues 10–15 (GIGKST) and Lys39. Ser14 is a Mg(2+) binding site. The [4Fe-4S] cluster site is built by Cys95 and Cys129. ATP is bound at residue 180-181 (NR).

It belongs to the NifH/BchL/ChlL family. As to quaternary structure, homodimer. Protochlorophyllide reductase is composed of three subunits; ChlL, ChlN and ChlB. [4Fe-4S] cluster serves as cofactor.

Its subcellular location is the plastid. The protein resides in the chloroplast. The enzyme catalyses chlorophyllide a + oxidized 2[4Fe-4S]-[ferredoxin] + 2 ADP + 2 phosphate = protochlorophyllide a + reduced 2[4Fe-4S]-[ferredoxin] + 2 ATP + 2 H2O. Its pathway is porphyrin-containing compound metabolism; chlorophyll biosynthesis (light-independent). Component of the dark-operative protochlorophyllide reductase (DPOR) that uses Mg-ATP and reduced ferredoxin to reduce ring D of protochlorophyllide (Pchlide) to form chlorophyllide a (Chlide). This reaction is light-independent. The L component serves as a unique electron donor to the NB-component of the complex, and binds Mg-ATP. The polypeptide is Light-independent protochlorophyllide reductase iron-sulfur ATP-binding protein (Nephroselmis olivacea (Green alga)).